We begin with the raw amino-acid sequence, 381 residues long: G-protein coupled receptor homolog Q2/3L (381 aa).

The Extracellular segment spans residues 1–91; that stretch reads MNYTLSTVSS…HCDDGVDTTS (91 aa). N-linked (GlcNAc...) asparagine; by host glycans are attached at residues asparagine 2, asparagine 15, asparagine 19, asparagine 41, asparagine 50, asparagine 56, and asparagine 62. A helical transmembrane segment spans residues 92 to 112; it reads FGLITLYSTIFFLGLFGNIIV. Over 113 to 126 the chain is Cytoplasmic; the sequence is LTVLRKYKIKTIQD. Residues 127-147 form a helical membrane-spanning segment; it reads MFLLNLTLSDLIFVLVFPFNL. Over 148 to 165 the chain is Extracellular; sequence YDSIAKQWSLGDCLCKFK. Residues 166-186 form a helical membrane-spanning segment; the sequence is AMFYFVGFYNSMSFITLMSID. The Cytoplasmic portion of the chain corresponds to 187–206; the sequence is RYLAVVHPVKSMPIRTKRYG. Residues 207-227 form a helical membrane-spanning segment; that stretch reads IVLSMVVWIVSTIESFPIMLF. The Extracellular segment spans residues 228–251; that stretch reads YETKKVYGITYCHVFYNDNAKIWK. The chain crosses the membrane as a helical span at residues 252–272; it reads LFINFEINIFGMIIPLTILLY. Residues 273-294 are Cytoplasmic-facing; it reads CYYKILNTLKTSQTKNKKAIKM. A helical membrane pass occupies residues 295-315; the sequence is VFLIVICSVLFLLPFSVTVFV. The Extracellular segment spans residues 316–336; that stretch reads SSLYLLNVFSGCMALRFVNLA. Residues 337-357 form a helical membrane-spanning segment; sequence VHVAEIVSLCHCFINPLIYAF. The Cytoplasmic portion of the chain corresponds to 358–381; that stretch reads CSREFTKKLLRLRTTSSAGSISIG.

The protein belongs to the G-protein coupled receptor 1 family.

Its subcellular location is the host cell membrane. Its function is as follows. Putative chemokine receptor. This is G-protein coupled receptor homolog Q2/3L from Ovis aries (Sheep).